Here is a 464-residue protein sequence, read N- to C-terminus: 3-isopropylmalate dehydratase large subunit (464 aa).

Positions 337, 397, and 400 each coordinate [4Fe-4S] cluster.

This sequence belongs to the aconitase/IPM isomerase family. LeuC type 1 subfamily. As to quaternary structure, heterodimer of LeuC and LeuD. [4Fe-4S] cluster is required as a cofactor.

It carries out the reaction (2R,3S)-3-isopropylmalate = (2S)-2-isopropylmalate. Its pathway is amino-acid biosynthesis; L-leucine biosynthesis; L-leucine from 3-methyl-2-oxobutanoate: step 2/4. In terms of biological role, catalyzes the isomerization between 2-isopropylmalate and 3-isopropylmalate, via the formation of 2-isopropylmaleate. The polypeptide is 3-isopropylmalate dehydratase large subunit (Bacillus cereus (strain ATCC 14579 / DSM 31 / CCUG 7414 / JCM 2152 / NBRC 15305 / NCIMB 9373 / NCTC 2599 / NRRL B-3711)).